The chain runs to 96 residues: Putative pterin-4-alpha-carbinolamine dehydratase (96 aa).

Belongs to the pterin-4-alpha-carbinolamine dehydratase family.

The enzyme catalyses (4aS,6R)-4a-hydroxy-L-erythro-5,6,7,8-tetrahydrobiopterin = (6R)-L-erythro-6,7-dihydrobiopterin + H2O. This Prochlorococcus marinus subsp. pastoris (strain CCMP1986 / NIES-2087 / MED4) protein is Putative pterin-4-alpha-carbinolamine dehydratase.